Reading from the N-terminus, the 362-residue chain is Phosphoserine aminotransferase (362 aa).

L-glutamate contacts are provided by serine 9 and arginine 42. Pyridoxal 5'-phosphate is bound by residues 76-77, tryptophan 102, threonine 153, aspartate 174, and glutamine 197; that span reads GR. N6-(pyridoxal phosphate)lysine is present on lysine 198. 239–240 serves as a coordination point for pyridoxal 5'-phosphate; the sequence is NT.

Belongs to the class-V pyridoxal-phosphate-dependent aminotransferase family. SerC subfamily. As to quaternary structure, homodimer. The cofactor is pyridoxal 5'-phosphate.

The protein resides in the cytoplasm. The enzyme catalyses O-phospho-L-serine + 2-oxoglutarate = 3-phosphooxypyruvate + L-glutamate. The catalysed reaction is 4-(phosphooxy)-L-threonine + 2-oxoglutarate = (R)-3-hydroxy-2-oxo-4-phosphooxybutanoate + L-glutamate. The protein operates within amino-acid biosynthesis; L-serine biosynthesis; L-serine from 3-phospho-D-glycerate: step 2/3. Its pathway is cofactor biosynthesis; pyridoxine 5'-phosphate biosynthesis; pyridoxine 5'-phosphate from D-erythrose 4-phosphate: step 3/5. Catalyzes the reversible conversion of 3-phosphohydroxypyruvate to phosphoserine and of 3-hydroxy-2-oxo-4-phosphonooxybutanoate to phosphohydroxythreonine. This Shigella boydii serotype 4 (strain Sb227) protein is Phosphoserine aminotransferase.